The chain runs to 310 residues: N-acetyl-gamma-glutamyl-phosphate reductase (310 aa).

Residue cysteine 117 is part of the active site.

The protein belongs to the NAGSA dehydrogenase family. Type 2 subfamily.

It is found in the cytoplasm. It catalyses the reaction N-acetyl-L-glutamate 5-semialdehyde + phosphate + NADP(+) = N-acetyl-L-glutamyl 5-phosphate + NADPH + H(+). It participates in amino-acid biosynthesis; L-arginine biosynthesis; N(2)-acetyl-L-ornithine from L-glutamate: step 3/4. In terms of biological role, catalyzes the NADPH-dependent reduction of N-acetyl-5-glutamyl phosphate to yield N-acetyl-L-glutamate 5-semialdehyde. In Brucella suis (strain ATCC 23445 / NCTC 10510), this protein is N-acetyl-gamma-glutamyl-phosphate reductase.